The following is a 949-amino-acid chain: Serine/threonine-protein kinase KIPK2 (949 aa).

4 disordered regions span residues 79 to 116 (LETSASAGTSRSTSPSNKGAMKKPFPMGTPRSPRVGPS), 323 to 344 (TALSSGLKGKLDNFPGSGTEKS), 407 to 426 (STSTENHPPSNTSHTTDKNV), and 495 to 525 (SSEKFDFSLSSKNSLGDYSSSTSMSEESNLS). The span at 81 to 94 (TSASAGTSRSTSPS) shows a compositional bias: low complexity. 2 stretches are compositionally biased toward polar residues: residues 407 to 420 (STSTENHPPSNTSH) and 495 to 512 (SSEKFDFSLSSKNSLGDY). Low complexity predominate over residues 513–525 (SSSTSMSEESNLS). A Protein kinase domain is found at 559–898 (FNLLKKLGCG…AAEIKRHPFF (340 aa)). Residues 565–573 (LGCGDIGTV) and K588 each bind ATP. Residue D684 is the Proton acceptor of the active site.

Belongs to the protein kinase superfamily. Ser/Thr protein kinase family. In terms of assembly, interacts with KCBP, PERK8, PERK9, PERK10 and PERK13.

It carries out the reaction L-seryl-[protein] + ATP = O-phospho-L-seryl-[protein] + ADP + H(+). The enzyme catalyses L-threonyl-[protein] + ATP = O-phospho-L-threonyl-[protein] + ADP + H(+). Functionally, serine/threonine-protein kinase that could be involved in the negative regulation of root growth. The sequence is that of Serine/threonine-protein kinase KIPK2 from Arabidopsis thaliana (Mouse-ear cress).